Consider the following 642-residue polypeptide: 1,4-alpha-glucan branching enzyme GlgB (642 aa).

The active-site Nucleophile is Asp304. The Proton donor role is filled by Glu355.

The protein belongs to the glycosyl hydrolase 13 family. GlgB subfamily. As to quaternary structure, monomer.

The catalysed reaction is Transfers a segment of a (1-&gt;4)-alpha-D-glucan chain to a primary hydroxy group in a similar glucan chain.. Its pathway is glycan biosynthesis; glycogen biosynthesis. In terms of biological role, catalyzes the formation of the alpha-1,6-glucosidic linkages in glycogen by scission of a 1,4-alpha-linked oligosaccharide from growing alpha-1,4-glucan chains and the subsequent attachment of the oligosaccharide to the alpha-1,6 position. In Streptococcus pneumoniae serotype 4 (strain ATCC BAA-334 / TIGR4), this protein is 1,4-alpha-glucan branching enzyme GlgB.